Here is a 3977-residue protein sequence, read N- to C-terminus: Hybrid PKS-NRPS synthetase gkaA (3977 aa).

Residues 4–441 (EEPIAVIGSG…GTNAHVILEN (438 aa)) enclose the Ketosynthase family 3 (KS3) domain. Residues Cys-177, His-316, and His-361 each act as for beta-ketoacyl synthase activity in the active site. The 317-residue stretch at 551-867 (VFTGQGAQWP…TGVIHRGKND (317 aa)) folds into the Malonyl-CoA:ACP transacylase (MAT) domain. Positions 937 to 1072 (NPLLGTRTTD…GRITVTLGES (136 aa)) are N-terminal hotdog fold. In terms of domain architecture, PKS/mFAS DH spans 937-1241 (NPLLGTRTTD…VVAFSEATAD (305 aa)). His-969 functions as the Proton acceptor; for dehydratase activity in the catalytic mechanism. A C-terminal hotdog fold region spans residues 1087–1241 (LVSIPQDRFY…VVAFSEATAD (155 aa)). The Proton donor; for dehydratase activity role is filled by Asp-1147. The methyltransferase (cMeT) domain stretch occupies residues 1286 to 1580 (YMKKTVEEFP…FSGIDSSTPE (295 aa)). The region spanning 2128–2301 (TYVLFGLTSD…AASILHIGAV (174 aa)) is the Ketoreductase (KR) domain. Residues 2409 to 2490 (SEVFEIISGA…QLLEYAIDNM (82 aa)) form the Carrier 1 domain. O-(pantetheine 4'-phosphoryl)serine is present on Ser-2450. Residues 2497-2542 (HSNGEQGTVSDSGSTNIQLTPASTPSVPSVNLASDSTGSSQVGEDV) are disordered. Residues 2499–2538 (NGEQGTVSDSGSTNIQLTPASTPSVPSVNLASDSTGSSQV) show a composition bias toward polar residues. The segment at 2584-3018 (EKIIPMSPGQ…LKDISLFSKE (435 aa)) is condensation. The adenylation stretch occupies residues 3048-3437 (IAEHPDTISI…GALEILGRID (390 aa)). In terms of domain architecture, Carrier 2 spans 3552-3632 (FSLTPTEDKL…AMASLITPAS (81 aa)). Ser-3592 is modified (O-(pantetheine 4'-phosphoryl)serine). The Thioester reductase (TE) domain occupies 3672-3890 (LTGATGFLGH…FVDLVSVQNV (219 aa)).

The protein in the C-terminal section; belongs to the NRP synthetase family. The cofactor is pantetheine 4'-phosphate.

It participates in mycotoxin biosynthesis. In terms of biological role, hybrid PKS-NRPS synthetase; part of the gene cluster that mediates the biosynthesis of GKK1032, fungal natural products containing a macrocyclic para-cyclophane connected to a decahydrofluorene ring system that show potent antitumor activities. Within the pathway, the PKS-NRPS gkaA, with the help of the trans-enoyl reductase gkaC, synthesize the polyketide-tyrosyl acyl thioester product which can be reductively off-loaded by the terminal reductase (R) domain in gkaA. The PKS module of gkaA acts in combination with the trans-acting enoyl reductase gkaC to produce a methylated polyketide attached to the ACP domain. In parallel, the adenylation (A) domain of the NRPS module activated L-tyrosine, which is then transferred to the ACP domain. The condensation (C) domain subsequently links this group to the polyketide chain, forming an enzyme-bound amide. The alpha/beta hydrolase gkaG is then required to catalyze the subsequent Knoevenagel condensation that affords the 3-pyrrolin-2-one ring, whereas the three proteins gkaB, gkadX and gkaZ then function synergistically to form the cyclophane. In Penicillium citrinum, this protein is Hybrid PKS-NRPS synthetase gkaA.